The primary structure comprises 483 residues: FK506-binding protein 4 (483 aa).

Disordered stretches follow at residues 41 to 171 (TAEP…EEFV) and 208 to 371 (TGNY…LKKP). The segment covering 68–93 (EEDDDEYLDIDGEDSEDDEESDDEEV) has biased composition (acidic residues). Composition is skewed to basic and acidic residues over residues 108-121 (REAAIKKLLEATKE) and 130-150 (ADAKPNGKGKKDSKGKAKASE). Acidic residues-rich tracts occupy residues 151–167 (SDDEKSDEDDEEGEPNF), 216–233 (GQDEEDDEDEEDYSDEEY), and 241–256 (LESDSDYESDELDEID). Composition is skewed to basic and acidic residues over residues 298-309 (LVAKDKKQAEKQ), 323-344 (ENKDVKKEGKSDKKVQFAKDLE), and 351-370 (AKDKLEKKEEKKDDKADLKK). Positions 397–483 (GDRVSLRYIG…VFDIKLLEIK (87 aa)) constitute a PPIase FKBP-type domain.

This sequence belongs to the FKBP-type PPIase family. FKBP3/4 subfamily. As to quaternary structure, binds to histones H3 and H4.

It localises to the nucleus. It catalyses the reaction [protein]-peptidylproline (omega=180) = [protein]-peptidylproline (omega=0). Its function is as follows. PPIase that acts as a histone chaperone. Histone proline isomerase that increases the rate of cis-trans isomerization at prolines on the histone H3 N-terminal tail. Proline isomerization influences H3 methylation thereby regulating gene expression. The sequence is that of FK506-binding protein 4 (FPR4) from Chaetomium thermophilum (strain DSM 1495 / CBS 144.50 / IMI 039719) (Thermochaetoides thermophila).